The sequence spans 224 residues: Probable GTP-binding protein EngB (224 aa).

The EngB-type G domain occupies 31–205 (IGVEIAFAGR…LSILNDWCHP (175 aa)). GTP-binding positions include 39–46 (GRSNAGKS), 66–70 (GRTQL), 84–87 (DLPG), 151–154 (TKSD), and 184–186 (LSS). Residues serine 46 and threonine 68 each coordinate Mg(2+).

The protein belongs to the TRAFAC class TrmE-Era-EngA-EngB-Septin-like GTPase superfamily. EngB GTPase family. The cofactor is Mg(2+).

In terms of biological role, necessary for normal cell division and for the maintenance of normal septation. The polypeptide is Probable GTP-binding protein EngB (Shewanella frigidimarina (strain NCIMB 400)).